Consider the following 569-residue polypeptide: Peptide transporter PTR_C (569 aa).

Over residues 1-25 (MSQNVDEKVVHDDASVIRSVDRSES) the composition is skewed to basic and acidic residues. Residues 1 to 43 (MSQNVDEKVVHDDASVIRSVDRSESDSYPDSVSPEGAEPSEEE) form a disordered region. Residues 54–74 (VPLACWLVAIVELAERFSYYG) traverse the membrane as a helical segment. The N-linked (GlcNAc...) asparagine glycan is linked to Asn-98. 3 helical membrane passes run 104 to 124 (ALSY…AWVA), 134 to 154 (ISIF…TSLP), and 159 to 179 (NTSL…TGGV). The N-linked (GlcNAc...) asparagine glycan is linked to Asn-212. 8 helical membrane passes run 215–235 (IQNV…SVIA), 245–265 (FWAA…ALFL), 322–342 (ALYA…YGQM), 366–386 (IDSI…YPFI), 398–418 (IFWG…LQHF), 444–464 (VALQ…ASIT), 479–499 (SFIM…GIAL), and 510–530 (WTYT…WFLF).

This sequence belongs to the major facilitator superfamily. Proton-dependent oligopeptide transporter (POT/PTR) (TC 2.A.17) family.

It localises to the cell membrane. The catalysed reaction is a dipeptide(out) + H(+)(out) = a dipeptide(in) + H(+)(in). It catalyses the reaction an L-amino acid tripeptide(out) + H(+)(out) = an L-amino acid tripeptide(in) + H(+)(in). Functionally, peptide transporter that exploits the inwardly directed proton motive force to facilitate the cellular uptake of di/tripeptides. Shows strong uptake specificity towards the dipeptides Tyr-Phe and Leu-Gly and the tripeptide Phe-Gly-Gly, when compared to PTR_A and PTR_B. Also able to import peptide-based antifungals such as the peptide-nucleoside drug nikkomycin Z as well as the glucosamine-6-phosphate synthase inhibitor, L-norvalyl-N3-(4-methoxyfumaroyl)-L-2,3-diaminopropionoic acid (Nva-FMDP). The chain is Peptide transporter PTR_C from Candidozyma auris (Yeast).